Reading from the N-terminus, the 125-residue chain is Small ribosomal subunit protein uS12 (125 aa).

Residues 9–31 (RQGREVEKIKSKSPAMENSPQRR) form a disordered region. A 3-methylthioaspartic acid modification is found at aspartate 89.

Belongs to the universal ribosomal protein uS12 family. As to quaternary structure, part of the 30S ribosomal subunit. Contacts proteins S8 and S17. May interact with IF1 in the 30S initiation complex.

In terms of biological role, with S4 and S5 plays an important role in translational accuracy. Its function is as follows. Interacts with and stabilizes bases of the 16S rRNA that are involved in tRNA selection in the A site and with the mRNA backbone. Located at the interface of the 30S and 50S subunits, it traverses the body of the 30S subunit contacting proteins on the other side and probably holding the rRNA structure together. The combined cluster of proteins S8, S12 and S17 appears to hold together the shoulder and platform of the 30S subunit. The chain is Small ribosomal subunit protein uS12 from Verminephrobacter eiseniae (strain EF01-2).